Reading from the N-terminus, the 427-residue chain is GTPase Obg (427 aa).

Residues 1–158 (MFVDKVKVYV…RDVILELKVL (158 aa)) enclose the Obg domain. Positions 118–144 (KGGRGGRGNTRFATPANPAPELSENGE) are disordered. The OBG-type G domain maps to 159 to 329 (ADAGLVGFPS…LLRAIMDTIE (171 aa)). GTP is bound by residues 165-172 (GFPSVGKS), 190-194 (FTTIT), 212-215 (DLPG), 282-285 (NKMD), and 310-312 (SAL). Ser172 and Thr192 together coordinate Mg(2+). The OCT domain maps to 349–427 (KHDKEQDPFV…LLEFEFEFIE (79 aa)).

The protein belongs to the TRAFAC class OBG-HflX-like GTPase superfamily. OBG GTPase family. Monomer. Requires Mg(2+) as cofactor.

Its subcellular location is the cytoplasm. Functionally, an essential GTPase which binds GTP, GDP and possibly (p)ppGpp with moderate affinity, with high nucleotide exchange rates and a fairly low GTP hydrolysis rate. Plays a role in control of the cell cycle, stress response, ribosome biogenesis and in those bacteria that undergo differentiation, in morphogenesis control. The chain is GTPase Obg from Halalkalibacterium halodurans (strain ATCC BAA-125 / DSM 18197 / FERM 7344 / JCM 9153 / C-125) (Bacillus halodurans).